Here is a 253-residue protein sequence, read N- to C-terminus: Rab GTPase-activating protein 1-like, isoform 10 (253 aa).

Positions 8–222 (SMTFEERENR…MNEIQAAKNS (215 aa)) form a coiled coil. Positions 233-253 (TATGTQPLQPAPVTQPPKEST) are disordered.

The sequence is that of Rab GTPase-activating protein 1-like, isoform 10 (RABGAP1L) from Homo sapiens (Human).